A 173-amino-acid chain; its full sequence is Crossover junction endodeoxyribonuclease RuvC (173 aa).

Active-site residues include aspartate 8, glutamate 67, and aspartate 139. Aspartate 8, glutamate 67, and aspartate 139 together coordinate Mg(2+).

It belongs to the RuvC family. As to quaternary structure, homodimer which binds Holliday junction (HJ) DNA. The HJ becomes 2-fold symmetrical on binding to RuvC with unstacked arms; it has a different conformation from HJ DNA in complex with RuvA. In the full resolvosome a probable DNA-RuvA(4)-RuvB(12)-RuvC(2) complex forms which resolves the HJ. It depends on Mg(2+) as a cofactor.

It localises to the cytoplasm. The catalysed reaction is Endonucleolytic cleavage at a junction such as a reciprocal single-stranded crossover between two homologous DNA duplexes (Holliday junction).. In terms of biological role, the RuvA-RuvB-RuvC complex processes Holliday junction (HJ) DNA during genetic recombination and DNA repair. Endonuclease that resolves HJ intermediates. Cleaves cruciform DNA by making single-stranded nicks across the HJ at symmetrical positions within the homologous arms, yielding a 5'-phosphate and a 3'-hydroxyl group; requires a central core of homology in the junction. The consensus cleavage sequence is 5'-(A/T)TT(C/G)-3'. Cleavage occurs on the 3'-side of the TT dinucleotide at the point of strand exchange. HJ branch migration catalyzed by RuvA-RuvB allows RuvC to scan DNA until it finds its consensus sequence, where it cleaves and resolves the cruciform DNA. This Pectobacterium carotovorum subsp. carotovorum (strain PC1) protein is Crossover junction endodeoxyribonuclease RuvC.